A 251-amino-acid polypeptide reads, in one-letter code: Protein crossbronx (251 aa).

One can recognise a UBC core domain in the interval 20 to 176; the sequence is QQEYKILAEY…TRENIRESLA (157 aa). The interval 211–251 is disordered; sequence QSKHLESQSQQSNNGGNGGGGGAATGLSWVKEGEFKPLSVE. A compositionally biased stretch (gly residues) spans 225-234; that stretch reads GGNGGGGGAA.

This sequence belongs to the ubiquitin-conjugating enzyme family. FTS subfamily.

The polypeptide is Protein crossbronx (cbx) (Drosophila willistoni (Fruit fly)).